A 469-amino-acid chain; its full sequence is Repressible acid phosphatase (469 aa).

A signal peptide spans 1–16 (MLSILLSLLSLSGTHA). Residues N23 and N31 are each glycosylated (N-linked (GlcNAc...) asparagine). H77 serves as the catalytic Nucleophile. N-linked (GlcNAc...) asparagine glycans are attached at residues N129, N201, N229, N250, and N317. D340 acts as the Proton donor in catalysis. N-linked (GlcNAc...) asparagine glycosylation is found at N392 and N447.

Belongs to the histidine acid phosphatase family. In terms of processing, glycosylated during secretion across the membrane.

It is found in the secreted. It catalyses the reaction a phosphate monoester + H2O = an alcohol + phosphate. This Kluyveromyces lactis (strain ATCC 8585 / CBS 2359 / DSM 70799 / NBRC 1267 / NRRL Y-1140 / WM37) (Yeast) protein is Repressible acid phosphatase (PHO5).